The following is a 1653-amino-acid chain: Protein strawberry notch (1653 aa).

Disordered regions lie at residues 1-46 (MTSK…GRDL), 190-211 (GSPA…GGAI), 237-265 (GSNA…PNPG), 317-345 (NNQK…VKGN), and 883-1043 (SVAD…PSGS). The segment covering 11–36 (DADDDNDNFDEDDSGSDFDDDEDPDQ) has biased composition (acidic residues). A phosphoserine mark is found at serine 24 and serine 26. A compositionally biased stretch (polar residues) spans 194–205 (ARSSGNAGTTGS). Residues 256-265 (SPTGGIPNPG) are compositionally biased toward low complexity. Residues 329–342 (GSGGPAGGAPGSGV) show a composition bias toward gly residues. A compositionally biased stretch (low complexity) spans 883–901 (SVADSTSSLSNNSNITTAA). Phosphoserine occurs at positions 929 and 931. The segment covering 966-975 (IDDEDEDHDV) has biased composition (acidic residues). The segment covering 980–998 (RSVASDASSDFNPFFSGSD) has biased composition (polar residues). The segment covering 1008-1027 (RSKKSKKAQKKSKKKVKKEK) has biased composition (basic residues). Positions 1064-1125 (LSTQDKIQDL…RKIERLGARL (62 aa)) form a coiled coil.

It belongs to the SBNO family. As to quaternary structure, interacts with vg for function in the wing disk. Interacts with Su(H) for function in the eye disk. As to expression, at stage 8, when the formation of the midline precursor cells depends on Notch signaling, high level of expression is seen in the midline precursor cells and a lower level in the surrounding epidermal cells. Between stages 11 and 14, expression is uniform throughout the epidermis, and at stage 16, high level of expression is restricted to the central nervous system. Expressed in the larval leg, wing and eye imaginal disks. Expression is over the wing disk and accumulates within the pleural region.

The protein resides in the nucleus. Its function is as follows. Notch pathway component, may contribute to the specificity between lateral and inductive Notch signaling pathways in the wing disk. Required during many developmental stages including oogenesis, embryogenesis and imaginal development of the eye, wing and leg. Ebi and sno regulate EGFR-dependent Delta transcription in the developing eye, by antagonizing a repressor function of Suppressor of Hairless (Su(H)). They are required in the R-cells for normal cone cell development. This is Protein strawberry notch from Drosophila melanogaster (Fruit fly).